The primary structure comprises 354 residues: Glycine betaine/proline betaine transport system permease protein ProW (354 aa).

Positions 1–41 (MADQNNPWDTTPAADSAAQSADAWGTPTTAPTDGGGADWLT) are disordered. The Cytoplasmic portion of the chain corresponds to 1 to 99 (MADQNNPWDT…VDYILNGFQQ (99 aa)). A compositionally biased stretch (low complexity) spans 13-32 (AADSAAQSADAWGTPTTAPT). The helical transmembrane segment at 100-120 (LLLGMPAPVAIIVFALIAWQI) threads the bilayer. S121 is a topological domain (periplasmic). Residues 122-142 (GVGMGVATLVSLIAIGAIGAW) traverse the membrane as a helical segment. Residues 143 to 148 (SQAMVT) are Cytoplasmic-facing. The ABC transmembrane type-1 domain occupies 145–324 (AMVTLALVLT…ILAIILDRLT (180 aa)). The helical transmembrane segment at 149-169 (LALVLTALLFCIVIGLPLGIW) threads the bilayer. Topologically, residues 170-198 (LARSPRAAKIIRPLLDAMQTTPAFVYLVP) are periplasmic. The chain crosses the membrane as a helical span at residues 199-219 (IVMLFGIGNVPGVVVTIIFAL). The Cytoplasmic portion of the chain corresponds to 220-270 (PPIIRLTILGINQVPADLIEASRSFGASPRQMLFKVQLPLAMPTIMAGVNQ). Residues 271–291 (TLMLALSMVVIASMIAVGGLG) form a helical membrane-spanning segment. Residues 292-300 (QMVLRGIGR) are Periplasmic-facing. A helical membrane pass occupies residues 301 to 321 (LDMGLATVGGVGIVILAIILD). Residues 322–354 (RLTQAVGRDSRSRGNRRWYTTGPVGLLTRPFIK) lie on the Cytoplasmic side of the membrane.

The protein belongs to the binding-protein-dependent transport system permease family. CysTW subfamily. As to quaternary structure, the complex is composed of two ATP-binding proteins (ProV), two transmembrane proteins (ProW) and a solute-binding protein (ProX).

Its subcellular location is the cell inner membrane. Its function is as follows. Part of the ProU ABC transporter complex involved in glycine betaine and proline betaine uptake. Probably responsible for the translocation of the substrate across the membrane. This Escherichia coli (strain K12) protein is Glycine betaine/proline betaine transport system permease protein ProW.